Here is a 324-residue protein sequence, read N- to C-terminus: BURP domain-containing protein 5 (324 aa).

The signal sequence occupies residues 1-30 (MCATLCTLLDEISILILMLLLIQLEIRVSA). A BURP domain is found at 109–323 (FFLETNLQSS…QPDVVVWTRR (215 aa)).

As to expression, expressed in panicles.

The sequence is that of BURP domain-containing protein 5 (BURP5) from Oryza sativa subsp. japonica (Rice).